A 143-amino-acid chain; its full sequence is Putative pre-16S rRNA nuclease (143 aa).

The protein belongs to the YqgF nuclease family.

The protein localises to the cytoplasm. Its function is as follows. Could be a nuclease involved in processing of the 5'-end of pre-16S rRNA. In Lactobacillus johnsonii (strain CNCM I-12250 / La1 / NCC 533), this protein is Putative pre-16S rRNA nuclease.